The sequence spans 226 residues: Ribonuclease 3 (226 aa).

The RNase III domain occupies 5 to 127 (LERLQRALGY…IIGAIYLDAG (123 aa)). Mg(2+) is bound at residue glutamate 40. Aspartate 44 is a catalytic residue. The Mg(2+) site is built by aspartate 113 and glutamate 116. Residue glutamate 116 is part of the active site. In terms of domain architecture, DRBM spans 154–224 (DSKTRLQEYL…AKQALLALGV (71 aa)).

This sequence belongs to the ribonuclease III family. As to quaternary structure, homodimer. Mg(2+) serves as cofactor.

Its subcellular location is the cytoplasm. The enzyme catalyses Endonucleolytic cleavage to 5'-phosphomonoester.. Digests double-stranded RNA. Involved in the processing of primary rRNA transcript to yield the immediate precursors to the large and small rRNAs (23S and 16S). Processes some mRNAs, and tRNAs when they are encoded in the rRNA operon. Processes pre-crRNA and tracrRNA of type II CRISPR loci if present in the organism. In Hahella chejuensis (strain KCTC 2396), this protein is Ribonuclease 3.